The primary structure comprises 356 residues: MRRELLLERIDKLKATMPWYILEYYQSKLAVPYSFTTLYEYLKEYDRFFNWVLESGITDASHIAEIPLSVLENMSKKDMEAFILYLRERPLLNANTTQNGVSQTTINRTLSALSSLYKYLTEEVENEQGEPYFYRNVMKKVATKKKKETLAARAENIKQKLFLGDETEEFLQYIDTEYPKKLSNRALSSFNKNKERDLAIIALLLASGVRLSEAVNLDLKDINLKMMVIEVTRKGGKRDSVNVAAFAKPYLEEYLSIRIKRYKAEKTDTAFFLTEYRGIPNRIDASSVEKMVAKYSEDFKVRVTPHKLRHTLATRLYDATKSQVLVSHQLGHASTQVTDLYTHIVNDEQKNALDKL.

Residues T16 to T121 form the Core-binding (CB) domain. Residues E169–D354 form the Tyr recombinase domain. Residues R210, K234, H306, R309, and H332 contribute to the active site. Catalysis depends on Y341, which acts as the O-(3'-phospho-DNA)-tyrosine intermediate.

It belongs to the 'phage' integrase family. XerS subfamily.

Its subcellular location is the cytoplasm. Its activity is regulated as follows. FtsK is required for recombination. In terms of biological role, site-specific tyrosine recombinase, which acts by catalyzing the cutting and rejoining of the recombining DNA molecules. Essential to convert dimers of the bacterial chromosome into monomers to permit their segregation at cell division. The chain is Tyrosine recombinase XerS from Streptococcus sanguinis (strain SK36).